We begin with the raw amino-acid sequence, 240 residues long: Ribonuclease PH (240 aa).

Phosphate-binding positions include R87 and 125 to 127 (GTR).

It belongs to the RNase PH family. As to quaternary structure, homohexameric ring arranged as a trimer of dimers.

It catalyses the reaction tRNA(n+1) + phosphate = tRNA(n) + a ribonucleoside 5'-diphosphate. Phosphorolytic 3'-5' exoribonuclease that plays an important role in tRNA 3'-end maturation. Removes nucleotide residues following the 3'-CCA terminus of tRNAs; can also add nucleotides to the ends of RNA molecules by using nucleoside diphosphates as substrates, but this may not be physiologically important. Probably plays a role in initiation of 16S rRNA degradation (leading to ribosome degradation) during starvation. The polypeptide is Ribonuclease PH (Dictyoglomus turgidum (strain DSM 6724 / Z-1310)).